Reading from the N-terminus, the 576-residue chain is Zinc finger protein 791 (576 aa).

In terms of domain architecture, KRAB spans 4-90 (VAFKDVSVSF…AETFSPNLSV (87 aa)). C2H2-type zinc fingers lie at residues 100-122 (YECT…MRSH), 132-154 (YKCK…ERSH), 160-182 (YKCK…EQTH), 188-210 (YECK…ERIH), 216-238 (YECK…ERTH), 244-266 (YACK…MITH), 272-294 (YKCK…ERIH), 300-322 (YTCK…ERIH), 328-350 (YKCK…VRVH), 356-378 (YKCK…ERTH), 384-406 (YECK…KRNH), 412-434 (YECK…MITH), 440-462 (YKCR…ERTH), 468-490 (YECK…KRTH), 496-518 (YECK…MRMH), 524-546 (YKCK…TRIH), and 552-574 (LECK…MRMH).

This sequence belongs to the krueppel C2H2-type zinc-finger protein family.

The protein resides in the nucleus. Functionally, may be involved in transcriptional regulation. This is Zinc finger protein 791 (ZNF791) from Pongo abelii (Sumatran orangutan).